An 877-amino-acid polypeptide reads, in one-letter code: Telomere length regulation protein clk-2 (877 aa).

Over residues 488 to 501 the composition is skewed to polar residues; that stretch reads NKDSAAITSKNNLR. Residues 488–509 form a disordered region; that stretch reads NKDSAAITSKNNLRLDSDDDED.

It belongs to the TEL2 family.

The protein resides in the nucleus. Its subcellular location is the chromosome. It is found in the telomere. In terms of biological role, DNA damage checkpoint protein required for DNA damage-induced cell cycle arrest and apoptosis, thereby playing a role in genome stability. Regulator of telomere length. The polypeptide is Telomere length regulation protein clk-2 (clk-2) (Caenorhabditis elegans).